Here is a 432-residue protein sequence, read N- to C-terminus: MFDIRAIRDNPDAFRNAWNRRKSGLGSVVDDILKLDAQWREATTAKQDAESARNANSKLIGQAKAKKDEAEAARLMALVAEAKTTMEQAGEAEDNARKALDDLLMGLPNLPLDEVPEGSDEHGNVEQHTWGEPKLINDPKDHADLGEALKGQGGFPMMDFEAAARMSGARFVALRGKLTRLERALANFMLDLQTTEHGYEEMSVPVLVRDQALYGTGQLPKFAEDLFRTTVDHWLTPTAEVSLTNLVREQILDAAQLPLRFTAHTPCFRSEAGSAGRDTKGMIRQHQFNKVELVSIVANEAEGLAELERMTGCAEEVLKRLELPFRRMLLCTGDMGAGARKTYDLEVWLPSQNTYREISSCSYCGDFQARRMDARYRPEPKAKPEYVHTLNGSGLAVGRTLVAVLENYQNADGSITVPKALVPYMGGVEVIN.

238 to 240 (TAE) is a binding site for L-serine. 269–271 (RSE) is an ATP binding site. Glu-292 is an L-serine binding site. 357-360 (EISS) contacts ATP. Residue Ser-393 participates in L-serine binding.

The protein belongs to the class-II aminoacyl-tRNA synthetase family. Type-1 seryl-tRNA synthetase subfamily. As to quaternary structure, homodimer. The tRNA molecule binds across the dimer.

It is found in the cytoplasm. It catalyses the reaction tRNA(Ser) + L-serine + ATP = L-seryl-tRNA(Ser) + AMP + diphosphate + H(+). The catalysed reaction is tRNA(Sec) + L-serine + ATP = L-seryl-tRNA(Sec) + AMP + diphosphate + H(+). Its pathway is aminoacyl-tRNA biosynthesis; selenocysteinyl-tRNA(Sec) biosynthesis; L-seryl-tRNA(Sec) from L-serine and tRNA(Sec): step 1/1. Functionally, catalyzes the attachment of serine to tRNA(Ser). Is also able to aminoacylate tRNA(Sec) with serine, to form the misacylated tRNA L-seryl-tRNA(Sec), which will be further converted into selenocysteinyl-tRNA(Sec). The protein is Serine--tRNA ligase of Hyphomonas neptunium (strain ATCC 15444).